The sequence spans 761 residues: Isocyanide synthase xanB (761 aa).

A disordered region spans residues 24–128 (LLGSYETKAP…GKGTKADPSH (105 aa)). Residues 36–48 (ETSEIAASSSSSE) are compositionally biased toward low complexity. The segment covering 93 to 102 (TVSTPQSSDN) has biased composition (polar residues). Residues 115-126 (FKDEGKGTKADP) are compositionally biased toward basic and acidic residues.

It belongs to the isocyanide synthase family.

It participates in secondary metabolite biosynthesis. Its function is as follows. Isocyanide synthase; part of the gene cluster that mediates the biosynthesis of the isocyanide xanthocillin and its derivatives. The first step of the pathway consists in the conversion of tyrosine into a vinyl-isonitrile intermediate by the isocyanide synthase xanB. Subsequent oxidative dimerization of this intermediate to form xanthocillin may involve the cytochrome P450 monooxygenase xanG, whose expression is coregulated with that of XanB. Xanthocillin can be further modified by the isonitrile hydratase-like protein xanA which introduces N-formyl groups and the methyltransferase xanE which introduces methyl groups, leading to the production of several derivatives including fumiformamide. Finally, fumiformamide can be subject to both oxidative and reductive cyclization to yield melanocins E and F, respectively. This Aspergillus fumigatus (strain ATCC MYA-4609 / CBS 101355 / FGSC A1100 / Af293) (Neosartorya fumigata) protein is Isocyanide synthase xanB.